Reading from the N-terminus, the 290-residue chain is MRLPVLGKDTVRMRDPEGLQDKITRIQRGGQEKLQIISDFDMTLSRFSRNGERCPTCYNIIDNSNIISDEGRKKLKCLFDIYYPLEIDPKKSIEEKYPLMVEWWSKAHDLFYEQRIQKDRLAQVVKEPQATLRDGYDLFFNNLYQREIPLFIFSAGIGDVLEEIIRQAGVFHPNTKVVSNYMDFDDNGILTGFKGDLIHTYNKNSSVLKDTEYFKEISHRTNILLLGDTLGDLTMADGVSTVENIIKIGFLNDKVEELTEQFLQSYDIVLLRDETLDVVNGILQFVTAKN.

Asp39 functions as the Nucleophile in the catalytic mechanism. Mg(2+) is bound by residues Asp39 and Asp41. Asp41 functions as the Proton donor in the catalytic mechanism. Glu86 is a CMP binding site. Glu86 is a binding site for N(7)-methyl-GMP. Residues 154 to 155 and Lys203 contribute to the substrate site; that span reads SA. Asp228 is a binding site for Mg(2+).

This sequence belongs to the pyrimidine 5'-nucleotidase family. In terms of assembly, monomer.

The protein resides in the cytoplasm. The enzyme catalyses N(7)-methyl-GMP + H2O = N(7)-methylguanosine + phosphate. The catalysed reaction is CMP + H2O = cytidine + phosphate. It catalyses the reaction a ribonucleoside 5'-phosphate + H2O = a ribonucleoside + phosphate. Specifically hydrolyzes 7-methylguanosine monophosphate (m(7)GMP) to 7-methylguanosine and inorganic phosphate. The specific activity for m(7)GMP may protect cells against undesired salvage of m(7)GMP and its incorporation into nucleic acids. Also has weak activity for CMP. UMP and purine nucleotides are poor substrates. The chain is 7-methylguanosine phosphate-specific 5'-nucleotidase B (Nt5c3b-b) from Xenopus laevis (African clawed frog).